Consider the following 382-residue polypeptide: Adenosine 3'-phospho 5'-phosphosulfate transporter 2 (382 aa).

The segment covering 1–10 has biased composition (polar residues); that stretch reads MSVSNRNGNG. Residues 1–33 form a disordered region; it reads MSVSNRNGNGSEVIYVGDRSTNRPPRNAPSPDE. Transmembrane regions (helical) follow at residues 56–76, 83–103, 121–141, 144–164, 170–190, 197–217, 234–254, 271–291, 299–319, and 323–343; these read LCCAGVFVLYLLYGYMQELIF, PYGWFLTLVQFAYYTVFGYVE, VLLAFLTLGTMGLSNSSLGYL, PTQVIFKCCKLVPVLIGSILI, GPLDFLAAIAMCLGLTLFTLA, NFNPFGVLLISLALLCDAAIG, VVIYSYGIGFVYLSVIMLLTG, FGYAFLFSLSGYLGIQIVLTL, LAATVTTARKAVTIALSFVFF, and FTINYLWSGLIVVLGIYLNVY.

The protein belongs to the nucleotide-sugar transporter family. SLC35B subfamily.

The protein localises to the golgi apparatus membrane. Functionally, mediates the transport of adenosine 3'-phospho 5'-phosphosulfate (PAPS), from cytosol into Golgi. PAPS is a universal sulfuryl donor for sulfation events that take place in the Golgi. Essential for viability. Involved in glycosaminoglycan synthesis and the subsequent signaling. May be involved in hh and dpp signaling by controlling the sulfation of heparan sulfate (HS). This is Adenosine 3'-phospho 5'-phosphosulfate transporter 2 from Aedes aegypti (Yellowfever mosquito).